A 204-amino-acid chain; its full sequence is MKVKICGITDVETAKHACEYGADAIGFVFAESKRKITPGLAKEIIGEIPVHVFKVGVFVNESVEVIQKIAEECGLTHVQLHGDEDNHQIRRLNIPSIKAVGVALEKDIECAKKYDTDYLLFDSPKEKFHGGNGKTFSWELLAHMPNELREKTILAGGLNILNIEEAIRTVQPYMIDVSSGVETEGKKDLKKIKQFIKKAKECSK.

Belongs to the TrpF family.

The catalysed reaction is N-(5-phospho-beta-D-ribosyl)anthranilate = 1-(2-carboxyphenylamino)-1-deoxy-D-ribulose 5-phosphate. Its pathway is amino-acid biosynthesis; L-tryptophan biosynthesis; L-tryptophan from chorismate: step 3/5. This Bacillus mycoides (strain KBAB4) (Bacillus weihenstephanensis) protein is N-(5'-phosphoribosyl)anthranilate isomerase.